The chain runs to 193 residues: NADH-quinone oxidoreductase subunit B (193 aa).

The [4Fe-4S] cluster site is built by cysteine 72, cysteine 73, cysteine 137, and cysteine 167.

Belongs to the complex I 20 kDa subunit family. In terms of assembly, NDH-1 is composed of 14 different subunits. Subunits NuoB, C, D, E, F, and G constitute the peripheral sector of the complex. The cofactor is [4Fe-4S] cluster.

The protein resides in the cell inner membrane. It carries out the reaction a quinone + NADH + 5 H(+)(in) = a quinol + NAD(+) + 4 H(+)(out). Functionally, NDH-1 shuttles electrons from NADH, via FMN and iron-sulfur (Fe-S) centers, to quinones in the respiratory chain. The immediate electron acceptor for the enzyme in this species is believed to be ubiquinone. Couples the redox reaction to proton translocation (for every two electrons transferred, four hydrogen ions are translocated across the cytoplasmic membrane), and thus conserves the redox energy in a proton gradient. In Bartonella bacilliformis (strain ATCC 35685 / KC583 / Herrer 020/F12,63), this protein is NADH-quinone oxidoreductase subunit B.